A 170-amino-acid polypeptide reads, in one-letter code: E1B protein, small T-antigen (170 aa).

Residues 137-170 form a disordered region; the sequence is PAQPPHGLDPVREEEEEEEEEENLRAGLDPQTEL. Residues 148–158 show a composition bias toward acidic residues; it reads REEEEEEEEEE.

The protein belongs to the adenoviridae E1B 19 kDa protein family.

Its subcellular location is the host cell membrane. It is found in the host nucleus envelope. It localises to the host nucleus lamina. Putative adenovirus Bcl-2 homolog that inhibits apoptosis induced by TNF or FAS pathways, as well as p53-mediated apoptosis. Without E1B 19K function, virus production is compromised because of premature death of host cell. Interacts with Bax protein in cell lysates. This chain is E1B protein, small T-antigen, found in Homo sapiens (Human).